Reading from the N-terminus, the 103-residue chain is Large ribosomal subunit protein bL21 (103 aa).

It belongs to the bacterial ribosomal protein bL21 family. As to quaternary structure, part of the 50S ribosomal subunit. Contacts protein L20.

In terms of biological role, this protein binds to 23S rRNA in the presence of protein L20. This chain is Large ribosomal subunit protein bL21, found in Nocardia farcinica (strain IFM 10152).